The primary structure comprises 241 residues: Nicotinamide riboside kinase (241 aa).

Gly21–Thr29 serves as a coordination point for ATP. Mg(2+) is bound by residues Ser28 and Asp47. The active-site Proton acceptor is Asp47. Substrate is bound by residues Asp47–Tyr50, Trp67–Asp68, and Asp68. Arg163 lines the ATP pocket. Position 164 (Arg164) interacts with substrate. Residues Arg167, Arg167–Gly169, and Asp213–Gln215 each bind ATP. Gly169 to Tyr170 is a substrate binding site.

Belongs to the uridine kinase family. NRK subfamily.

It carries out the reaction beta-nicotinamide D-riboside + ATP = beta-nicotinamide D-ribonucleotide + ADP + H(+). The enzyme catalyses beta-D-ribosylnicotinate + ATP = nicotinate beta-D-ribonucleotide + ADP + H(+). It participates in cofactor biosynthesis; NAD(+) biosynthesis. In terms of biological role, catalyzes the phosphorylation of nicotinamide riboside (NR) and nicotinic acid riboside (NaR) to form nicotinamide mononucleotide (NMN) and nicotinic acid mononucleotide (NaMN). This is Nicotinamide riboside kinase (NRK1) from Eremothecium gossypii (strain ATCC 10895 / CBS 109.51 / FGSC 9923 / NRRL Y-1056) (Yeast).